The primary structure comprises 442 residues: D-serine dehydratase (442 aa).

At lysine 118 the chain carries N6-(pyridoxal phosphate)lysine.

This sequence belongs to the serine/threonine dehydratase family. DsdA subfamily. In terms of assembly, monomer. Pyridoxal 5'-phosphate is required as a cofactor.

The enzyme catalyses D-serine = pyruvate + NH4(+). This chain is D-serine dehydratase, found in Escherichia coli (strain 55989 / EAEC).